The chain runs to 299 residues: HTH-type transcriptional regulator ArgP (299 aa).

The HTH lysR-type domain maps to 4 to 60 (LDYKLLLALDAVMQEQNFERAAQRLHITQSAISQRIKQLEQQFAEPLLIRSQPLQAT). A DNA-binding region (H-T-H motif) is located at residues 21–40 (FERAAQRLHITQSAISQRIK).

Belongs to the LysR transcriptional regulatory family. In terms of assembly, homodimer.

Its function is as follows. Controls the transcription of genes involved in arginine and lysine metabolism. The polypeptide is HTH-type transcriptional regulator ArgP (Aeromonas salmonicida).